The following is an 865-amino-acid chain: DNA topoisomerase 1 (865 aa).

The region spanning 3 to 142 is the Toprim domain; it reads KALVIVESPA…RYSRVVFNEI (140 aa). A Mg(2+)-binding site is contributed by glutamate 9. A disordered region spans residues 37–65; it reads LPTSGSAAKKSADSTSTKTAKKPKKDERG. A compositionally biased stretch (low complexity) spans 39-54; the sequence is TSGSAAKKSADSTSTK. Aspartate 111 lines the Mg(2+) pocket. Positions 158-575 constitute a Topo IA-type catalytic domain; it reads NINRVNAQQA…NFFSDFTQQL (418 aa). Residues 192-197 are interaction with DNA; it reads SAGRVQ. Catalysis depends on tyrosine 319, which acts as the O-(5'-phospho-DNA)-tyrosine intermediate. C4-type zinc fingers lie at residues 599–630, 662–689, and 711–736; these read CPTC…KERC, CQKC…NPTC, and CEKC…NDEC.

It belongs to the type IA topoisomerase family. Monomer. The cofactor is Mg(2+).

It carries out the reaction ATP-independent breakage of single-stranded DNA, followed by passage and rejoining.. Its function is as follows. Releases the supercoiling and torsional tension of DNA, which is introduced during the DNA replication and transcription, by transiently cleaving and rejoining one strand of the DNA duplex. Introduces a single-strand break via transesterification at a target site in duplex DNA. The scissile phosphodiester is attacked by the catalytic tyrosine of the enzyme, resulting in the formation of a DNA-(5'-phosphotyrosyl)-enzyme intermediate and the expulsion of a 3'-OH DNA strand. The free DNA strand then undergoes passage around the unbroken strand, thus removing DNA supercoils. Finally, in the religation step, the DNA 3'-OH attacks the covalent intermediate to expel the active-site tyrosine and restore the DNA phosphodiester backbone. The sequence is that of DNA topoisomerase 1 from Salmonella typhimurium (strain LT2 / SGSC1412 / ATCC 700720).